Here is a 21-residue protein sequence, read N- to C-terminus: Fibrinogen beta chain (21 aa).

Acidic residues predominate over residues 1–11 (EFPTDYDEGED). The tract at residues 1 to 21 (EFPTDYDEGEDDRPKVGLGAR) is disordered. At tyrosine 6 the chain carries Sulfotyrosine.

Heterohexamer; disulfide linked. Contains 2 sets of 3 non-identical chains (alpha, beta and gamma). The 2 heterotrimers are in head to head conformation with the N-termini in a small central domain. Conversion of fibrinogen to fibrin is triggered by thrombin, which cleaves fibrinopeptides A and B from alpha and beta chains, and thus exposes the N-terminal polymerization sites responsible for the formation of the soft clot.

The protein localises to the secreted. Its function is as follows. Cleaved by the protease thrombin to yield monomers which, together with fibrinogen alpha (FGA) and fibrinogen gamma (FGG), polymerize to form an insoluble fibrin matrix. Fibrin has a major function in hemostasis as one of the primary components of blood clots. In addition, functions during the early stages of wound repair to stabilize the lesion and guide cell migration during re-epithelialization. Was originally thought to be essential for platelet aggregation, based on in vitro studies using anticoagulated blood. However subsequent studies have shown that it is not absolutely required for thrombus formation in vivo. Enhances expression of SELP in activated platelets. Maternal fibrinogen is essential for successful pregnancy. Fibrin deposition is also associated with infection, where it protects against IFNG-mediated hemorrhage. May also facilitate the antibacterial immune response via both innate and T-cell mediated pathways. This chain is Fibrinogen beta chain (FGB), found in Bison bonasus (European bison).